The primary structure comprises 407 residues: Phosphoglycerate kinase (407 aa).

Residues 24 to 26 (DIN), R39, 60 to 63 (HQSR), R117, and R157 contribute to the substrate site. ATP-binding positions include E330 and 355–358 (GGHI).

This sequence belongs to the phosphoglycerate kinase family.

It is found in the cytoplasm. The catalysed reaction is (2R)-3-phosphoglycerate + ATP = (2R)-3-phospho-glyceroyl phosphate + ADP. The protein operates within carbohydrate degradation; glycolysis; pyruvate from D-glyceraldehyde 3-phosphate: step 2/5. The sequence is that of Phosphoglycerate kinase (pgk) from Archaeoglobus fulgidus (strain ATCC 49558 / DSM 4304 / JCM 9628 / NBRC 100126 / VC-16).